A 480-amino-acid chain; its full sequence is Selenium-binding protein 3 (480 aa).

Selenite is bound by residues Cys-12 and Cys-13.

The protein belongs to the selenium-binding protein family. Expressed in young seedlings, mostly in roots.

In Arabidopsis thaliana (Mouse-ear cress), this protein is Selenium-binding protein 3 (SBP3).